Consider the following 1556-residue polypeptide: MSAVGALLAREYNVTAEKCDFFLENGSFDSVIAALPALNQEQETVTQKVSKNGKELINVASVNIEIPERISLSNNGRQLFKFIVDIEILPCENDNEATLVVSSDSVSLFQIGFKMENNSKIAVDKQLPLILDICAHKNQERALRNQLENRKSLERKPSRKRRKKNSNVNDPEKLLKSRIHELSLSYKDFECSPVVFRYNDSSLTWVLSFNLKLKFLNNKFNRFSVEANQILDLTFSNRDENEFERYHKHSHIHSNFIQKQFISQILEYSKDRLSKIKPFLPQSIPDLKVNLLPFQRESVEWMLIKEGHGNSLSDTPTVIDEVGLIDFMNEYYAYGYELIARSPDEVGPSLLWNKLTGYILTTEDAAHLYNQYRKERLSGDYPVCAKGVLAEEMGLGKTIEILSLILLNRRKLKDSEATFIDDENRTITKTKTTLIICPNAILKQWLEEIELHANSLKWYTYRGYNEIMKDCKTVDEAVQQLCQYDIIVTSYNIIATEVHHAEFNRSIRSRRLKSPKYDYSSPLALMQFYRIILDEVQMLRSSSTYSAKCTSLLHRIHTWGVSGTPIQNIYNFRMIMSYLKLHPFCDEVDFIRTLQEEIKLRNEAKDYTSNDFVCQLKGVRFSIKDCMNIFYRYDLCIRHSKANVASQIHIPRQHNFIIPLEFAPIEWDNYLNLWNNFLELSGYNSDGSGSPRVSNAFLNEWLSRLRYICCHALFPEILSTRQKRLHGHLSRISNIDDILISMRMDAFDSLIGYYRERFHLSIKQAQYELEISNTPAKALESFIKIRDDLMIHIRQKFNVEDPFDKSLNLSEDEDEHMDERFGEKETSSGDESDREINGAKNHDNHNNDGMLSNHLKKKGLRAMMNLLHDCYFFLGSVYYNLGTRKLEEADDKHRKEKTEEVVYSDVFPKNELEEIEENRLLEQENYANAEILRKSILSSEARKVDMTIKMARTKFAPMTSNIPLRLINIEFDHKNDYSSNLAVSRCFKSLSKLIEGLNEQTKNFNELLDELLIIIYEPVHRTEDDDSTNKIIGNEEYSTSIDSQDKIFSLLGCLEIILQNRDNILTSESEVKIPKHLVPEGSIISKYQKQLLNSLRLISGTPLRTVFDELKNSRIVRRISSSNESESTIQNFEDYLLQYEVESKSLFKYNKQVRESLKILGSIYNAKTEYYSQLQRISDSLVSLHSLSAPQLSHLIRTINKSLGGTLDAKINNIESRLIYLKNLSRLKDTLNDNQILSCSICLGEVEIGAIIKCGHYFCKSCILTWLRAHSKCPICKGFCSISEVYNFKFKNSTEKREKEIQEPRREGADSSQDNSNENSIISNMSEVEKLFGNKYEQFHQINEVHQIHIKESFGAKIDFVIKLISYLRLKSEQENADPPQVILYSQKTEYLKVIGKVLKLYHIEHLACLSNTANVGETINNFKRQPSVTCLLLNVKTLGAGLNLINAKHIFLLDPILNNSDELQAMGRNNRIGQDEETFVWNFMIRNTVEENILRYKCILEERKRKEKSKKGDKYDEAQDETDNEESDDAKFEISVVDQEVSNEHLWNCFFHGSD.

Ser-2 bears the N-acetylserine mark. The segment covering 145 to 156 (NQLENRKSLERK) has biased composition (basic and acidic residues). A disordered region spans residues 145–170 (NQLENRKSLERKPSRKRRKKNSNVND). Positions 378–583 (SGDYPVCAKG…MIMSYLKLHP (206 aa)) constitute a Helicase ATP-binding domain. 391-398 (EEMGLGKT) contacts ATP. Ser-810 bears the Phosphoserine mark. The tract at residues 810-850 (SEDEDEHMDERFGEKETSSGDESDREINGAKNHDNHNNDGM) is disordered. 2 stretches are compositionally biased toward basic and acidic residues: residues 817 to 827 (MDERFGEKETS) and 834 to 846 (REIN…DNHN). Residues 1239–1277 (CSICLGEVEIGAIIKCGHYFCKSCILTWLRAHSKCPICK) form an RING-type zinc finger. Basic and acidic residues predominate over residues 1297-1309 (REKEIQEPRREGA). Disordered stretches follow at residues 1297–1319 (REKE…SNEN) and 1508–1534 (EKSK…AKFE). Low complexity predominate over residues 1310–1319 (DSSQDNSNEN). The Helicase C-terminal domain maps to 1363 to 1531 (KLISYLRLKS…ETDNEESDDA (169 aa)). A compositionally biased stretch (basic and acidic residues) spans 1508–1518 (EKSKKGDKYDE). Residues 1519–1529 (AQDETDNEESD) show a composition bias toward acidic residues.

Belongs to the SNF2/RAD54 helicase family.

The protein resides in the nucleus. Functionally, is probably involved in a pathway contributing to genomic integrity. This is an uncharacterized protein from Saccharomyces cerevisiae (strain ATCC 204508 / S288c) (Baker's yeast).